The primary structure comprises 192 residues: Chromophore lyase CpcS/CpeS 2 (192 aa).

Belongs to the CpcS/CpeS biliprotein lyase family.

Functionally, covalently attaches a chromophore to Cys residue(s) of phycobiliproteins. The protein is Chromophore lyase CpcS/CpeS 2 of Synechocystis sp. (strain ATCC 27184 / PCC 6803 / Kazusa).